The sequence spans 406 residues: Serine/threonine transporter SstT (406 aa).

A run of 9 helical transmembrane segments spans residues 15 to 35 (LVIQ…VSPS), 47 to 67 (FVGA…AASI), 81 to 101 (IIVM…VLSF), 140 to 160 (ALMS…GLAL), 191 to 211 (FGIF…ALAG), 215 to 235 (LLVV…PAMV), 289 to 309 (IPLG…TLTL), 315 to 335 (MGIE…AVSA), and 362 to 382 (IAMQ…SAET).

Belongs to the dicarboxylate/amino acid:cation symporter (DAACS) (TC 2.A.23) family.

The protein localises to the cell inner membrane. It catalyses the reaction L-serine(in) + Na(+)(in) = L-serine(out) + Na(+)(out). The enzyme catalyses L-threonine(in) + Na(+)(in) = L-threonine(out) + Na(+)(out). Functionally, involved in the import of serine and threonine into the cell, with the concomitant import of sodium (symport system). The sequence is that of Serine/threonine transporter SstT from Vibrio vulnificus (strain YJ016).